The chain runs to 432 residues: Enolase 1 (432 aa).

Position 163 (glutamine 163) interacts with (2R)-2-phosphoglycerate. Glutamate 205 serves as the catalytic Proton donor. Mg(2+) is bound by residues aspartate 242, glutamate 287, and aspartate 314. (2R)-2-phosphoglycerate-binding residues include lysine 339, arginine 368, serine 369, and lysine 390. Residue lysine 339 is the Proton acceptor of the active site.

Belongs to the enolase family. The cofactor is Mg(2+).

The protein resides in the cytoplasm. Its subcellular location is the secreted. It localises to the cell surface. The catalysed reaction is (2R)-2-phosphoglycerate = phosphoenolpyruvate + H2O. It functions in the pathway carbohydrate degradation; glycolysis; pyruvate from D-glyceraldehyde 3-phosphate: step 4/5. In terms of biological role, catalyzes the reversible conversion of 2-phosphoglycerate (2-PG) into phosphoenolpyruvate (PEP). It is essential for the degradation of carbohydrates via glycolysis. The protein is Enolase 1 of Lactobacillus johnsonii (strain CNCM I-12250 / La1 / NCC 533).